Consider the following 347-residue polypeptide: UDP-glucose 4-epimerase (347 aa).

NAD(+) is bound by residues 11–13, 32–36, 65–66, Phe87, and Lys91; these read GYI, DNFHN, and DI. 131–133 is a binding site for substrate; it reads SAT. Tyr156 (proton acceptor) is an active-site residue. 2 residues coordinate NAD(+): Lys160 and Tyr184. Substrate is bound by residues 184–186, 205–207, 223–225, Arg238, and 299–302; these read YFN, NNL, NVF, and REGD.

It belongs to the NAD(P)-dependent epimerase/dehydratase family. In terms of assembly, homodimer. The cofactor is NAD(+).

The enzyme catalyses UDP-alpha-D-glucose = UDP-alpha-D-galactose. The catalysed reaction is UDP-N-acetyl-alpha-D-glucosamine = UDP-N-acetyl-alpha-D-galactosamine. It functions in the pathway carbohydrate metabolism; galactose metabolism. Functionally, catalyzes two distinct but analogous reactions: the reversible epimerization of UDP-glucose to UDP-galactose and the reversible epimerization of UDP-N-acetylglucosamine to UDP-N-acetylgalactosamine. The reaction with UDP-Gal plays a critical role in the Leloir pathway of galactose catabolism in which galactose is converted to the glycolytic intermediate glucose 6-phosphate. It contributes to the catabolism of dietary galactose and enables the endogenous biosynthesis of both UDP-Gal and UDP-GalNAc when exogenous sources are limited. Both UDP-sugar interconversions are important in the synthesis of glycoproteins and glycolipids. In Mus musculus (Mouse), this protein is UDP-glucose 4-epimerase (Gale).